The sequence spans 873 residues: DNA mismatch repair protein MutS (873 aa).

The segment at 1–34 is disordered; the sequence is MAAIPTPRLHRGVTHLSRQTKSRARHPMSTPQHT. Residues 8 to 26 show a composition bias toward basic residues; the sequence is RLHRGVTHLSRQTKSRARH. 635–642 is an ATP binding site; it reads GPNMGGKS.

Belongs to the DNA mismatch repair MutS family.

Functionally, this protein is involved in the repair of mismatches in DNA. It is possible that it carries out the mismatch recognition step. This protein has a weak ATPase activity. The sequence is that of DNA mismatch repair protein MutS from Chromobacterium violaceum (strain ATCC 12472 / DSM 30191 / JCM 1249 / CCUG 213 / NBRC 12614 / NCIMB 9131 / NCTC 9757 / MK).